We begin with the raw amino-acid sequence, 122 residues long: Large ribosomal subunit protein uL14 (122 aa).

It belongs to the universal ribosomal protein uL14 family. Part of the 50S ribosomal subunit. Forms a cluster with proteins L3 and L19. In the 70S ribosome, L14 and L19 interact and together make contacts with the 16S rRNA in bridges B5 and B8.

Its function is as follows. Binds to 23S rRNA. Forms part of two intersubunit bridges in the 70S ribosome. The polypeptide is Large ribosomal subunit protein uL14 (Vesicomyosocius okutanii subsp. Calyptogena okutanii (strain HA)).